We begin with the raw amino-acid sequence, 446 residues long: Transcriptional regulator STERILE APETALA (446 aa).

Residues 1–10 show a composition bias toward low complexity; the sequence is MSTSSSSSDN. A disordered region spans residues 1–32; sequence MSTSSSSSDNGAGGSGGVFEAPSPSRPRRGAN.

As to expression, expressed in inflorescence and floral meristems, young floral organ primordia, and later in ovule primordia.

Its subcellular location is the nucleus. In terms of biological role, transcriptional regulator involved in the specification of floral identity. Acts as A class cadastral protein by repressing the C class floral homeotic gene AGAMOUS in the external flower organs in association with APETALA2 and other repressors. Is required to maintain floral meristem identity in concert with AGAMOUS. Also interacts with APETALA2 to ensure the normal development of ovule. The sequence is that of Transcriptional regulator STERILE APETALA (SAP) from Arabidopsis thaliana (Mouse-ear cress).